The chain runs to 181 residues: RNA pyrophosphohydrolase (181 aa).

The Nudix hydrolase domain maps to 6–150; it reads GYRPNVGIII…KCEVYRCALK (145 aa). Positions 38–59 match the Nudix box motif; that stretch reads GGIKEGETPEQAMYRELYEEVG.

It belongs to the Nudix hydrolase family. RppH subfamily. The cofactor is a divalent metal cation.

Functionally, accelerates the degradation of transcripts by removing pyrophosphate from the 5'-end of triphosphorylated RNA, leading to a more labile monophosphorylated state that can stimulate subsequent ribonuclease cleavage. The polypeptide is RNA pyrophosphohydrolase (Psychromonas ingrahamii (strain DSM 17664 / CCUG 51855 / 37)).